Here is a 161-residue protein sequence, read N- to C-terminus: Cytochrome b6-f complex subunit 4 (161 aa).

The next 3 helical transmembrane spans lie at Leu37–Val57, Leu96–Glu116, and Ala130–Phe150.

Belongs to the cytochrome b family. PetD subfamily. The 4 large subunits of the cytochrome b6-f complex are cytochrome b6, subunit IV (17 kDa polypeptide, PetD), cytochrome f and the Rieske protein, while the 4 small subunits are PetG, PetL, PetM and PetN. The complex functions as a dimer.

Its subcellular location is the cellular thylakoid membrane. Component of the cytochrome b6-f complex, which mediates electron transfer between photosystem II (PSII) and photosystem I (PSI), cyclic electron flow around PSI, and state transitions. The protein is Cytochrome b6-f complex subunit 4 of Synechococcus elongatus.